We begin with the raw amino-acid sequence, 485 residues long: Glutamate--tRNA ligase 1 (485 aa).

Residues 10–20 (PSPTGAIHIGN) carry the 'HIGH' region motif. The short motif at 252–256 (KLSKR) is the 'KMSKS' region element. Residue lysine 255 coordinates ATP.

This sequence belongs to the class-I aminoacyl-tRNA synthetase family. Glutamate--tRNA ligase type 1 subfamily. Monomer.

Its subcellular location is the cytoplasm. The enzyme catalyses tRNA(Glu) + L-glutamate + ATP = L-glutamyl-tRNA(Glu) + AMP + diphosphate. Functionally, catalyzes the attachment of glutamate to tRNA(Glu) in a two-step reaction: glutamate is first activated by ATP to form Glu-AMP and then transferred to the acceptor end of tRNA(Glu). In Thermoanaerobacter pseudethanolicus (strain ATCC 33223 / 39E) (Clostridium thermohydrosulfuricum), this protein is Glutamate--tRNA ligase 1.